The primary structure comprises 312 residues: Holliday junction branch migration complex subunit RuvB (312 aa).

A large ATPase domain (RuvB-L) region spans residues methionine 1 to tyrosine 168. ATP is bound by residues arginine 8, glycine 49, lysine 52, threonine 53, threonine 54, glutamate 115–phenylalanine 117, arginine 158, tyrosine 168, and arginine 206. Threonine 53 serves as a coordination point for Mg(2+). The small ATPAse domain (RuvB-S) stretch occupies residues glutamate 169–glutamine 234. A head domain (RuvB-H) region spans residues glutamate 237–lysine 312. DNA is bound by residues lysine 290 and arginine 295.

It belongs to the RuvB family. Homohexamer. Forms an RuvA(8)-RuvB(12)-Holliday junction (HJ) complex. HJ DNA is sandwiched between 2 RuvA tetramers; dsDNA enters through RuvA and exits via RuvB. An RuvB hexamer assembles on each DNA strand where it exits the tetramer. Each RuvB hexamer is contacted by two RuvA subunits (via domain III) on 2 adjacent RuvB subunits; this complex drives branch migration. In the full resolvosome a probable DNA-RuvA(4)-RuvB(12)-RuvC(2) complex forms which resolves the HJ.

It localises to the cytoplasm. It catalyses the reaction ATP + H2O = ADP + phosphate + H(+). Its function is as follows. The RuvA-RuvB-RuvC complex processes Holliday junction (HJ) DNA during genetic recombination and DNA repair, while the RuvA-RuvB complex plays an important role in the rescue of blocked DNA replication forks via replication fork reversal (RFR). RuvA specifically binds to HJ cruciform DNA, conferring on it an open structure. The RuvB hexamer acts as an ATP-dependent pump, pulling dsDNA into and through the RuvAB complex. RuvB forms 2 homohexamers on either side of HJ DNA bound by 1 or 2 RuvA tetramers; 4 subunits per hexamer contact DNA at a time. Coordinated motions by a converter formed by DNA-disengaged RuvB subunits stimulates ATP hydrolysis and nucleotide exchange. Immobilization of the converter enables RuvB to convert the ATP-contained energy into a lever motion, pulling 2 nucleotides of DNA out of the RuvA tetramer per ATP hydrolyzed, thus driving DNA branch migration. The RuvB motors rotate together with the DNA substrate, which together with the progressing nucleotide cycle form the mechanistic basis for DNA recombination by continuous HJ branch migration. Branch migration allows RuvC to scan DNA until it finds its consensus sequence, where it cleaves and resolves cruciform DNA. In Ureaplasma parvum serovar 3 (strain ATCC 27815 / 27 / NCTC 11736), this protein is Holliday junction branch migration complex subunit RuvB.